A 382-amino-acid polypeptide reads, in one-letter code: uncharacterized protein (382 aa).

Helical transmembrane passes span 8-28 (VMLL…LNTL), 45-65 (MVSS…GYLI), 75-95 (YLAS…VGFW), 102-122 (FIAG…LMCS), 131-151 (LLAA…LLVS), 157-177 (LLHV…PLLF), 204-224 (LGVN…GLMP), 231-251 (GMAN…GILG), 270-290 (VQVF…AMAP), 291-311 (ALFI…AWAC), 325-345 (ALLL…AMLM), and 349-369 (SDNL…LMLL).

It belongs to the major facilitator superfamily. YcaD (TC 2.A.1.26) family.

The protein resides in the cell inner membrane. This is an uncharacterized protein from Salmonella paratyphi B (strain ATCC BAA-1250 / SPB7).